We begin with the raw amino-acid sequence, 79 residues long: MDILKKSLFLVLFLGLVSLSICEEEKRENEDEEKQEDDEQSEMKRALWKTMLKKLGTVALHAGKAALGAAADTISQGAQ.

Residues 1–22 (MDILKKSLFLVLFLGLVSLSIC) form the signal peptide. A propeptide spanning residues 23-45 (EEEKRENEDEEKQEDDEQSEMKR) is cleaved from the precursor. Glutamine amide is present on Gln-76. Residues 78–79 (AQ) constitute a propeptide that is removed on maturation.

The protein belongs to the frog skin active peptide (FSAP) family. Dermaseptin subfamily. As to expression, expressed by the skin glands.

It localises to the secreted. In terms of biological role, potent antimicrobial peptide with activity against bacteria, fungi and protozoa. Probably acts by disturbing membrane functions with its amphipathic structure. The protein is Dermaseptin-S8 of Phyllomedusa sauvagei (Sauvage's leaf frog).